An 81-amino-acid polypeptide reads, in one-letter code: Large ribosomal subunit protein bL31B (81 aa).

It belongs to the bacterial ribosomal protein bL31 family. Type B subfamily. As to quaternary structure, part of the 50S ribosomal subunit.

The sequence is that of Large ribosomal subunit protein bL31B from Halalkalibacterium halodurans (strain ATCC BAA-125 / DSM 18197 / FERM 7344 / JCM 9153 / C-125) (Bacillus halodurans).